Here is a 363-residue protein sequence, read N- to C-terminus: Adenosine deaminase (363 aa).

The Zn(2+) site is built by His42 and His44. A purine D-ribonucleoside-binding positions include 44–46, Asp172, and Gly201; that span reads HLD. Residues 170-184 are gating helix loop; regulates binding affinity for substrates and thus substrate selectivity; that stretch reads IGDTGHEAANIKASA. His226 provides a ligand contact to Zn(2+). Residues Glu229, His253, and Asp310 each contribute to the a purine D-ribonucleoside site. Position 310 (Asp310) interacts with Zn(2+).

It belongs to the metallo-dependent hydrolases superfamily. Adenosine and AMP deaminases family. Zn(2+) is required as a cofactor.

The enzyme catalyses adenosine + H2O + H(+) = inosine + NH4(+). It catalyses the reaction S-methyl-5'-thioadenosine + H2O + H(+) = S-methyl-5'-thioinosine + NH4(+). It participates in purine metabolism; purine nucleoside salvage. With respect to regulation, inhibited by coformycin and methylthiocoformycin (MT-coformycin). Catalyzes the hydrolytic deamination of adenosine to produce inosine. Unlike mammalian adenosine deaminases, also catalyzes the deamination of 5'-methylthioadenosine (MTA), a by-product of polyamine biosynthesis, to produce 5'-methylthioinosine (MTI). Plays an essential role in the purine salvage pathway which allows the parasite to use host cell purines for the synthesis of nucleic acids. This Plasmodium vivax (strain Salvador I) protein is Adenosine deaminase.